A 575-amino-acid chain; its full sequence is Isocitrate dehydrogenase kinase/phosphatase (575 aa).

Residues 316–322 and K337 contribute to the ATP site; that span reads ARGDKGL. The active site involves D372.

The protein belongs to the AceK family.

It is found in the cytoplasm. The enzyme catalyses L-seryl-[isocitrate dehydrogenase] + ATP = O-phospho-L-seryl-[isocitrate dehydrogenase] + ADP + H(+). Bifunctional enzyme which can phosphorylate or dephosphorylate isocitrate dehydrogenase (IDH) on a specific serine residue. This is a regulatory mechanism which enables bacteria to bypass the Krebs cycle via the glyoxylate shunt in response to the source of carbon. When bacteria are grown on glucose, IDH is fully active and unphosphorylated, but when grown on acetate or ethanol, the activity of IDH declines drastically concomitant with its phosphorylation. This Anaeromyxobacter sp. (strain Fw109-5) protein is Isocitrate dehydrogenase kinase/phosphatase.